We begin with the raw amino-acid sequence, 132 residues long: Small ribosomal subunit protein uS11 (132 aa).

This sequence belongs to the universal ribosomal protein uS11 family. In terms of assembly, part of the 30S ribosomal subunit. Interacts with proteins S7 and S18. Binds to IF-3.

Located on the platform of the 30S subunit, it bridges several disparate RNA helices of the 16S rRNA. Forms part of the Shine-Dalgarno cleft in the 70S ribosome. The chain is Small ribosomal subunit protein uS11 from Chlamydia trachomatis serovar D (strain ATCC VR-885 / DSM 19411 / UW-3/Cx).